The following is a 432-amino-acid chain: Trigger factor (432 aa).

The PPIase FKBP-type domain maps to 165 to 250; that stretch reads GDFAKIDFEG…LKEIQVKAPQ (86 aa).

This sequence belongs to the FKBP-type PPIase family. Tig subfamily.

It is found in the cytoplasm. It catalyses the reaction [protein]-peptidylproline (omega=180) = [protein]-peptidylproline (omega=0). Its function is as follows. Involved in protein export. Acts as a chaperone by maintaining the newly synthesized protein in an open conformation. Functions as a peptidyl-prolyl cis-trans isomerase. This is Trigger factor from Wolinella succinogenes (strain ATCC 29543 / DSM 1740 / CCUG 13145 / JCM 31913 / LMG 7466 / NCTC 11488 / FDC 602W) (Vibrio succinogenes).